A 195-amino-acid polypeptide reads, in one-letter code: Ethylene-responsive transcription factor ERF018 (195 aa).

Basic and acidic residues predominate over residues 1–13 (MVKQAMKEEEKKR). The tract at residues 1–22 (MVKQAMKEEEKKRNTAMQSKYK) is disordered. Positions 20-77 (KYKGVRKRKWGKWVSEIRLPHSRERIWLGSYDTPEKAARAFDAAQFCLRGGDANFNFP) form a DNA-binding region, AP2/ERF.

The protein belongs to the AP2/ERF transcription factor family. ERF subfamily.

The protein localises to the nucleus. Functionally, probably acts as a transcriptional activator. Binds to the GCC-box pathogenesis-related promoter element. May be involved in the regulation of gene expression by stress factors and by components of stress signal transduction pathways. This is Ethylene-responsive transcription factor ERF018 (ERF018) from Arabidopsis thaliana (Mouse-ear cress).